The sequence spans 206 residues: Thymidylate kinase (206 aa).

10–17 (GVDGVGKT) is a binding site for ATP.

Belongs to the thymidylate kinase family.

It carries out the reaction dTMP + ATP = dTDP + ADP. Phosphorylation of dTMP to form dTDP in both de novo and salvage pathways of dTTP synthesis. In Bifidobacterium longum (strain DJO10A), this protein is Thymidylate kinase.